A 309-amino-acid polypeptide reads, in one-letter code: Probable lipid kinase YegS-like (309 aa).

One can recognise a DAGKc domain in the interval 1 to 134 (MAPSHWRLIL…VDLLRIDADH (134 aa)). ATP is bound by residues Thr39, 65-71 (GDGTLSE), and Thr96. The Mg(2+) site is built by Leu219, Asp222, and Leu224. Catalysis depends on Glu280, which acts as the Proton acceptor.

Belongs to the diacylglycerol/lipid kinase family. YegS lipid kinase subfamily. Requires Mg(2+) as cofactor. Ca(2+) serves as cofactor.

Its subcellular location is the cytoplasm. Functionally, probably phosphorylates lipids; the in vivo substrate is unknown. This Xanthomonas axonopodis pv. citri (strain 306) protein is Probable lipid kinase YegS-like.